Consider the following 437-residue polypeptide: Amino-acid acetyltransferase (437 aa).

The N-acetyltransferase domain occupies 289-429 (ENIRLATSFD…EHYNYQRMSK (141 aa)).

It belongs to the acetyltransferase family. ArgA subfamily.

It localises to the cytoplasm. It catalyses the reaction L-glutamate + acetyl-CoA = N-acetyl-L-glutamate + CoA + H(+). The protein operates within amino-acid biosynthesis; L-arginine biosynthesis; N(2)-acetyl-L-ornithine from L-glutamate: step 1/4. The chain is Amino-acid acetyltransferase from Actinobacillus pleuropneumoniae serotype 3 (strain JL03).